Reading from the N-terminus, the 686-residue chain is tRNA (guanine(37)-N(1))-methyltransferase (686 aa).

The interval glycine 206–tyrosine 244 is disordered. Residues histidine 428, aspartate 466–leucine 467, aspartate 495–glycine 496, and asparagine 530 contribute to the S-adenosyl-L-methionine site.

This sequence belongs to the class I-like SAM-binding methyltransferase superfamily. TRM5/TYW2 family. In terms of assembly, monomer.

Its subcellular location is the mitochondrion matrix. The protein localises to the nucleus. It localises to the cytoplasm. It carries out the reaction guanosine(37) in tRNA + S-adenosyl-L-methionine = N(1)-methylguanosine(37) in tRNA + S-adenosyl-L-homocysteine + H(+). Its function is as follows. Specifically methylates the N1 position of guanosine-37 in various cytoplasmic and mitochondrial tRNAs. Methylation is not dependent on the nature of the nucleoside 5' of the target nucleoside. This is the first step in the biosynthesis of wybutosine (yW), a modified base adjacent to the anticodon of tRNAs and required for accurate decoding. This chain is tRNA (guanine(37)-N(1))-methyltransferase, found in Leishmania major.